The following is a 562-amino-acid chain: Furostanol glycoside 26-O-beta-glucosidase (562 aa).

Residues 1-44 (MAAQLGLPLVSCHRGASQAASSSAHLVPGASAIMQAGNRRQKMR) constitute a chloroplast transit peptide. A beta-D-glucoside contacts are provided by residues glutamine 110, histidine 214, and 259-260 (NE). Glutamate 260 acts as the Proton donor in catalysis. A disulfide bridge links cysteine 279 with cysteine 285. Residues tyrosine 401, glutamate 472, tryptophan 518, 525 to 526 (EW), and phenylalanine 534 contribute to the a beta-D-glucoside site. Catalysis depends on glutamate 472, which acts as the Nucleophile.

The protein belongs to the glycosyl hydrolase 1 family. As to quaternary structure, heterodimer. The N-terminus of the larger subunit is blocked and the smaller subunit might be derived from the larger one.

Its subcellular location is the plastid. The protein localises to the chloroplast. It carries out the reaction protodioscin + H2O = 26-deglucoprotodioscin + D-glucose. Partially inhibited by glucono-1,5-lactone, conduritol beta-epoxide and diosgenin, but not by beta-sitosterol or cholesterol. Its function is as follows. Beta-glucosidase involved in saponin metabolism. Highly specific for the cleavage of C-26-bound glucose moiety of furostanol glycosides such as protogracillin and protodioscin. No activity with nuatigenin glycoside. Convers furostanol glycosides to spirostanol glycosides. In Hellenia speciosa (Crepe ginger), this protein is Furostanol glycoside 26-O-beta-glucosidase.